The following is a 255-amino-acid chain: MGTLTLKQIQEEAQKLSIQEAIEYLSTLHSTGFKVDKLLEKYYRLKNKHDREMERLQKMLSFERQAISEGFNYIAGVDEAGRGPLAGPVVAAAVVLPNGLTIEGINDSKKLSESQREKLFSEIKEKALSYGISVIDEKYIDEVNILNATKRAMTEALSQLEPTADCILLDAVRLDNISTKQVPIIKGDSLSLSIAAASILAKVTRDRLLTEYDAKYPQYGFAAHKGYGTPQHISAIKKFGLCPIHRLSFVKNFVE.

The 184-residue stretch at 72 to 255 (NYIAGVDEAG…RLSFVKNFVE (184 aa)) folds into the RNase H type-2 domain. D78, E79, and D170 together coordinate a divalent metal cation.

This sequence belongs to the RNase HII family. Requires Mn(2+) as cofactor. It depends on Mg(2+) as a cofactor.

The protein resides in the cytoplasm. It carries out the reaction Endonucleolytic cleavage to 5'-phosphomonoester.. In terms of biological role, endonuclease that specifically degrades the RNA of RNA-DNA hybrids. This chain is Ribonuclease HII, found in Ruminiclostridium cellulolyticum (strain ATCC 35319 / DSM 5812 / JCM 6584 / H10) (Clostridium cellulolyticum).